Consider the following 602-residue polypeptide: Elongation factor 4 (602 aa).

The region spanning 7-189 is the tr-type G domain; sequence SRLRNFCIIA…AVVERVPPPK (183 aa). Residues 19–24 and 136–139 each bind GTP; these read DHGKST and NKVD.

Belongs to the TRAFAC class translation factor GTPase superfamily. Classic translation factor GTPase family. LepA subfamily.

It localises to the cell inner membrane. The enzyme catalyses GTP + H2O = GDP + phosphate + H(+). In terms of biological role, required for accurate and efficient protein synthesis under certain stress conditions. May act as a fidelity factor of the translation reaction, by catalyzing a one-codon backward translocation of tRNAs on improperly translocated ribosomes. Back-translocation proceeds from a post-translocation (POST) complex to a pre-translocation (PRE) complex, thus giving elongation factor G a second chance to translocate the tRNAs correctly. Binds to ribosomes in a GTP-dependent manner. The polypeptide is Elongation factor 4 (Prochlorococcus marinus (strain MIT 9211)).